The sequence spans 329 residues: G-protein coupled bile acid receptor 1 (329 aa).

Topologically, residues 1-15 (MMTPNSTELSAIPMG) are extracellular. An N-linked (GlcNAc...) asparagine glycan is attached at N5. A helical transmembrane segment spans residues 16-36 (VLGLSLALASLIVIANLLLAL). The Cytoplasmic segment spans residues 37-49 (GIALDRHLRSPPA). A helical membrane pass occupies residues 50 to 70 (GCFFLSLLLAGLLTGLALPML). Topologically, residues 71–84 (PGLWSRNHQGYWSC) are extracellular. A disulfide bridge links C84 with C154. Residues 85–105 (LLLHLTPNFCFLSLLANLLLV) traverse the membrane as a helical segment. Over 106–124 (HGERYMAVLQPLRPHGSVR) the chain is Cytoplasmic. The chain crosses the membrane as a helical span at residues 125 to 145 (LALFLTWVSSLFFASLPALGW). The Extracellular segment spans residues 146-164 (NHWSPDANCSSQAVFPAPY). The N-linked (GlcNAc...) asparagine glycan is linked to N153. A helical membrane pass occupies residues 165–185 (LYLEVYGLLLPAVGATALLSV). At 186–229 (RVLATAHRQLCEIRRLERAVCRDVPSTLARALTWRQARAQAGAT) the chain is on the cytoplasmic side. A helical membrane pass occupies residues 230–250 (LLFLLCWGPYVATLLLSVLAY). The Extracellular portion of the chain corresponds to 251 to 260 (ERRPPLGPGT). A helical membrane pass occupies residues 261–281 (LLSLISLGSTSAAAVPVAMGL). Residues 282 to 329 (GDQRYTAPWRTAAQRCLRVLRGRAKRDNPGPSTAYHTSSQCSIDLDLN) are Cytoplasmic-facing.

Belongs to the G-protein coupled receptor 1 family.

Its subcellular location is the cell membrane. In terms of biological role, receptor for bile acid. Bile acid-binding induces its internalization, activation of extracellular signal-regulated kinase and intracellular cAMP production. May be involved in the suppression of macrophage functions by bile acids. Involved in bile acid promoted GLP1R secretion. This Mus musculus (Mouse) protein is G-protein coupled bile acid receptor 1 (Gpbar1).